Consider the following 418-residue polypeptide: Serine/threonine-protein kinase PCRK1 (418 aa).

Positions 36 to 63 are disordered; sequence GSEFNSRDVSGTSTESSMGRKNSYPPVS. A Protein kinase domain is found at 84-369; that stretch reads FSRSVMIGEG…EVLEMVNKIV (286 aa). Residues 90–98 and Lys118 contribute to the ATP site; that span reads IGEGGFGCV. Asp218 functions as the Proton acceptor in the catalytic mechanism. Phosphoserine occurs at positions 373, 377, and 385.

Belongs to the protein kinase superfamily. Ser/Thr protein kinase family. In terms of assembly, interacts with FLS2.

Its subcellular location is the cell membrane. The enzyme catalyses L-seryl-[protein] + ATP = O-phospho-L-seryl-[protein] + ADP + H(+). It catalyses the reaction L-threonyl-[protein] + ATP = O-phospho-L-threonyl-[protein] + ADP + H(+). Involved in the activation of early immune responses. Plays a role in pattern-triggered immunity (PTI) induced by pathogen-associated molecular patterns (PAMPs) and damage-associated molecular patterns (DAMPs). Contributes to PTI in response to the bacterial pathogen Pseudomonas syringae pv maculicola strain ES4326. Contributes to PTI in response to the bacterial pathogen Pseudomonas syringae pv tomato strain DC3000. Functions redundantly with PCRK2 in basal resistance against bacterial pathogens and in regulation of plant immunity. Functions together with PCRK2 downstream of the PAMP receptor FLS2. Contributes to the induction of SARD1 and CBP60G, which are transcriptional activator of ICS1, an enzyme involved in salicylate (SA) biosynthesis upon pathogen attack. The sequence is that of Serine/threonine-protein kinase PCRK1 from Arabidopsis thaliana (Mouse-ear cress).